The primary structure comprises 335 residues: 1D-myo-inositol 2-acetamido-2-deoxy-alpha-D-glucopyranoside deacetylase (335 aa).

The Zn(2+) site is built by H19, D22, and H158.

It belongs to the MshB deacetylase family. Zn(2+) is required as a cofactor.

The catalysed reaction is 1D-myo-inositol 2-acetamido-2-deoxy-alpha-D-glucopyranoside + H2O = 1D-myo-inositol 2-amino-2-deoxy-alpha-D-glucopyranoside + acetate. Functionally, catalyzes the deacetylation of 1D-myo-inositol 2-acetamido-2-deoxy-alpha-D-glucopyranoside (GlcNAc-Ins) in the mycothiol biosynthesis pathway. This is 1D-myo-inositol 2-acetamido-2-deoxy-alpha-D-glucopyranoside deacetylase from Corynebacterium urealyticum (strain ATCC 43042 / DSM 7109).